The primary structure comprises 361 residues: Phospho-N-acetylmuramoyl-pentapeptide-transferase (361 aa).

10 consecutive transmembrane segments (helical) span residues 25–45 (RGIL…PAVI), 73–93 (TMGG…WGDL), 98–118 (VWLV…DDWI), 139–159 (IFGL…AAIT), 168–188 (IALP…IVGF), 200–220 (GLAI…AYAS), 237–257 (AGEL…FLWF), 264–284 (VFMG…VAVI), 289–309 (LVLV…MIQV), and 339–359 (VIVR…ATLK).

Belongs to the glycosyltransferase 4 family. MraY subfamily. It depends on Mg(2+) as a cofactor.

The protein resides in the cell inner membrane. The enzyme catalyses UDP-N-acetyl-alpha-D-muramoyl-L-alanyl-gamma-D-glutamyl-meso-2,6-diaminopimeloyl-D-alanyl-D-alanine + di-trans,octa-cis-undecaprenyl phosphate = di-trans,octa-cis-undecaprenyl diphospho-N-acetyl-alpha-D-muramoyl-L-alanyl-D-glutamyl-meso-2,6-diaminopimeloyl-D-alanyl-D-alanine + UMP. Its pathway is cell wall biogenesis; peptidoglycan biosynthesis. In terms of biological role, catalyzes the initial step of the lipid cycle reactions in the biosynthesis of the cell wall peptidoglycan: transfers peptidoglycan precursor phospho-MurNAc-pentapeptide from UDP-MurNAc-pentapeptide onto the lipid carrier undecaprenyl phosphate, yielding undecaprenyl-pyrophosphoryl-MurNAc-pentapeptide, known as lipid I. This chain is Phospho-N-acetylmuramoyl-pentapeptide-transferase, found in Xanthomonas campestris pv. campestris (strain 8004).